A 1358-amino-acid chain; its full sequence is Probable serine/threonine-protein kinase ifkB (1358 aa).

In terms of domain architecture, Protein kinase spans 1–582; that stretch reads MIGKGGFGVV…TKQLLESGLL (582 aa). ATP is bound by residues 2–10 and lysine 25; that span reads IGKGGFGVV. The segment at 125-359 is disordered; that stretch reads GANNTAGGGD…SSSRKKPPKE (235 aa). Residues 136–148 are compositionally biased toward polar residues; it reads VSNANSNKSMIVG. The segment covering 149-196 has biased composition (low complexity); that stretch reads NNNKKLTLSSSNTSSSSSLLSNNKSKILNTSKSTSTNTSTSTSTSNTN. Basic residues predominate over residues 197–208; sequence KNKKISKKKKSK. Positions 258 to 285 are enriched in low complexity; sequence NNNNDSNNNYHSDNESDSFSGSISMSDG. Positions 306-333 are enriched in acidic residues; the sequence is DDNENDDDDEEDDDDEYDEEDDDYETFD. Residues 342-351 are compositionally biased toward low complexity; sequence SNNSKLSTSS. Aspartate 413 serves as the catalytic Proton acceptor. Disordered regions lie at residues 445 to 470 and 1148 to 1204; these read DDLN…TAQQ and GSGG…QQTS. Over residues 447–466 the composition is skewed to low complexity; that stretch reads LNSSTSNAANNINLSSSTNS. Residues 1148–1172 are compositionally biased toward gly residues; it reads GSGGSGGSGGGSSMSSGGGGGGNSN. The span at 1185–1199 shows a compositional bias: low complexity; the sequence is SNQSTSSSGNSNNSN.

Belongs to the protein kinase superfamily. Ser/Thr protein kinase family. GCN2 subfamily.

The catalysed reaction is L-seryl-[protein] + ATP = O-phospho-L-seryl-[protein] + ADP + H(+). It carries out the reaction L-threonyl-[protein] + ATP = O-phospho-L-threonyl-[protein] + ADP + H(+). This is Probable serine/threonine-protein kinase ifkB (ifkB) from Dictyostelium discoideum (Social amoeba).